A 191-amino-acid chain; its full sequence is Protein Ves (191 aa).

The protein belongs to the Ves family.

This Escherichia coli (strain 55989 / EAEC) protein is Protein Ves.